The sequence spans 468 residues: Inositol polyphosphate 5-phosphatase K (468 aa).

Positions 34 to 337 (VHVVTWNVAS…SDHKPVTGTF (304 aa)) are catalytic. Residues 318-448 (NYVSHMAYSI…HSVVGISQPF (131 aa)) are required for interaction with GPR78 and PAK1. The tract at residues 340–468 (ELNPLMSVPL…DTLYEPEPQI (129 aa)) is required for ruffle localization.

This sequence belongs to the inositol 1,4,5-trisphosphate 5-phosphatase type II family. Interacts with GPR78; necessary for INPP5K localization at the endoplasmic reticulum. Interacts with PAK1; competes with GPR78. Expressed in the skeletal muscle and the eye.

It is found in the endoplasmic reticulum. The protein localises to the cytoplasm. It carries out the reaction 1D-myo-inositol 1,4,5-trisphosphate + H2O = 1D-myo-inositol 1,4-bisphosphate + phosphate. The catalysed reaction is 1,2-dioctanoyl-sn-glycero-3-phospho-(1D-myo-inositol-3,4,5-trisphosphate) + H2O = 1,2-dioctanoyl-sn-glycero-3-phospho-(1D-myo-inositol-3,4-bisphosphate) + phosphate. It catalyses the reaction 1D-myo-inositol 1,3,4,5-tetrakisphosphate + H2O = 1D-myo-inositol 1,3,4-trisphosphate + phosphate. The enzyme catalyses a 1,2-diacyl-sn-glycero-3-phospho-(1D-myo-inositol-4,5-bisphosphate) + H2O = a 1,2-diacyl-sn-glycero-3-phospho-(1D-myo-inositol 4-phosphate) + phosphate. It carries out the reaction a 1,2-diacyl-sn-glycero-3-phospho-(1D-myo-inositol-3,4,5-trisphosphate) + H2O = a 1,2-diacyl-sn-glycero-3-phospho-(1D-myo-inositol-3,4-bisphosphate) + phosphate. Functionally, inositol 5-phosphatase which acts on inositol 1,4,5-trisphosphate, inositol 1,3,4,5-tetrakisphosphate, phosphatidylinositol 4,5-bisphosphate and phosphatidylinositol 3,4,5-trisphosphate. Has 6-fold higher affinity for phosphatidylinositol 4,5-bisphosphate than for inositol 1,4,5-trisphosphate. Negatively regulates assembly of the actin cytoskeleton. Controls insulin-dependent glucose uptake among inositol 3,4,5-trisphosphate phosphatases; therefore, is the specific regulator for insulin signaling in skeletal muscle. In Mus musculus (Mouse), this protein is Inositol polyphosphate 5-phosphatase K.